We begin with the raw amino-acid sequence, 20 residues long: Putative antimicrobial protein 2 (20 aa).

The interval 1–20 is disordered; that stretch reads DLPECCSATELELDSGKQTS.

May have antimicrobial activity. In Cenchritis muricatus (Beaded periwinkle), this protein is Putative antimicrobial protein 2.